The sequence spans 181 residues: ATP-dependent protease subunit HslV (181 aa).

The active site involves T7. Residues A166, C169, and T172 each contribute to the Na(+) site.

Belongs to the peptidase T1B family. HslV subfamily. A double ring-shaped homohexamer of HslV is capped on each side by a ring-shaped HslU homohexamer. The assembly of the HslU/HslV complex is dependent on binding of ATP.

It localises to the cytoplasm. It catalyses the reaction ATP-dependent cleavage of peptide bonds with broad specificity.. With respect to regulation, allosterically activated by HslU binding. Protease subunit of a proteasome-like degradation complex believed to be a general protein degrading machinery. The polypeptide is ATP-dependent protease subunit HslV (Anaeromyxobacter dehalogenans (strain 2CP-1 / ATCC BAA-258)).